Consider the following 536-residue polypeptide: GMP synthase [glutamine-hydrolyzing] (536 aa).

One can recognise a Glutamine amidotransferase type-1 domain in the interval Lys-4 to Asp-206. Residue Cys-85 is the Nucleophile of the active site. Active-site residues include His-180 and Glu-182. In terms of domain architecture, GMPS ATP-PPase spans Trp-207–Arg-404. Ser-234 to Ser-240 is a binding site for ATP.

As to quaternary structure, homodimer.

The enzyme catalyses XMP + L-glutamine + ATP + H2O = GMP + L-glutamate + AMP + diphosphate + 2 H(+). Its pathway is purine metabolism; GMP biosynthesis; GMP from XMP (L-Gln route): step 1/1. Catalyzes the synthesis of GMP from XMP. The chain is GMP synthase [glutamine-hydrolyzing] from Albidiferax ferrireducens (strain ATCC BAA-621 / DSM 15236 / T118) (Rhodoferax ferrireducens).